The following is a 434-amino-acid chain: MVVKFTKSEALHKEALEHIVGGVNSPSRSFKAVGGGAPVAMERGKGAYFWDVDGNKYIDYLAAYGPIITGHAHPHITKAITTAAENGVLYGTPTALEVKFAKMLKEAMPALDKVRFVNSGTEAVMTTIRVARAYTGRTKIMKFAGCYHGHSDLVLVAAGSGPSTLGTPDSAGVPQSIAQEVITVPFNNVETLKEALDKWGHEVAAILVEPIVGNFGIVEPKTGFLEKVNELVHEAGALVIYDEVITAFRFMYGGAQDLLGVTPDLTALGKVIGGGLPIGAYGGKKEIMEQVAPLGPAYQAGTMAGNPASMASGIACLEVLQQEGLYEKLDELGAMLEKGILEQAEKHNIDITLNRLKGALTVYFTTNTIEDYDAAQDTDGEMFGKFFKLMLQEGINLAPSKYEAWFLTTEHTKEDIEYTIEAVGRAFAALANNK.

Lysine 270 carries the N6-(pyridoxal phosphate)lysine modification.

This sequence belongs to the class-III pyridoxal-phosphate-dependent aminotransferase family. HemL subfamily. In terms of assembly, homodimer. Pyridoxal 5'-phosphate is required as a cofactor.

It is found in the cytoplasm. The enzyme catalyses (S)-4-amino-5-oxopentanoate = 5-aminolevulinate. It functions in the pathway porphyrin-containing compound metabolism; protoporphyrin-IX biosynthesis; 5-aminolevulinate from L-glutamyl-tRNA(Glu): step 2/2. The sequence is that of Glutamate-1-semialdehyde 2,1-aminomutase 1 from Bacillus cereus (strain ATCC 10987 / NRS 248).